Consider the following 327-residue polypeptide: GMP reductase (327 aa).

Cys-176 (thioimidate intermediate) is an active-site residue. 205 to 228 is a binding site for NADP(+); the sequence is IIADGGIRTHGDIVKSIRFGATMV.

Belongs to the IMPDH/GMPR family. GuaC type 2 subfamily.

It carries out the reaction IMP + NH4(+) + NADP(+) = GMP + NADPH + 2 H(+). Its function is as follows. Catalyzes the irreversible NADPH-dependent deamination of GMP to IMP. It functions in the conversion of nucleobase, nucleoside and nucleotide derivatives of G to A nucleotides, and in maintaining the intracellular balance of A and G nucleotides. In Helicobacter pylori (strain ATCC 700392 / 26695) (Campylobacter pylori), this protein is GMP reductase.